Reading from the N-terminus, the 87-residue chain is Tan_10cys (87 aa).

The N-terminal stretch at 1–21 is a signal peptide; it reads MNLKVLFLLAMVLVTLCLGED. The propeptide occupies 22–27; it reads RVTDRR.

It belongs to the teretoxin C (TC) superfamily. Post-translationally, contains 5 disulfide bonds. Expressed by the venom duct.

It is found in the secreted. The sequence is that of Tan_10cys from Terebra anilis (Auger snail).